Here is a 224-residue protein sequence, read N- to C-terminus: Octanoyltransferase (224 aa).

A BPL/LPL catalytic domain is found at 45-223 (PSNKQAVWML…SLNKRFGLLW (179 aa)). Residues 87-94 (RGGDVTHH), 154-156 (SIG), and 167-169 (GIA) each bind substrate. Catalysis depends on Cys-185, which acts as the Acyl-thioester intermediate.

It belongs to the LipB family.

It is found in the cytoplasm. It carries out the reaction octanoyl-[ACP] + L-lysyl-[protein] = N(6)-octanoyl-L-lysyl-[protein] + holo-[ACP] + H(+). It participates in protein modification; protein lipoylation via endogenous pathway; protein N(6)-(lipoyl)lysine from octanoyl-[acyl-carrier-protein]: step 1/2. Catalyzes the transfer of endogenously produced octanoic acid from octanoyl-acyl-carrier-protein onto the lipoyl domains of lipoate-dependent enzymes. Lipoyl-ACP can also act as a substrate although octanoyl-ACP is likely to be the physiological substrate. This chain is Octanoyltransferase, found in Prochlorococcus marinus (strain SARG / CCMP1375 / SS120).